The sequence spans 470 residues: Cysteine--tRNA ligase (470 aa).

Cys30 serves as a coordination point for Zn(2+). The 'HIGH' region motif lies at 32–42 (PTVYNYIHIGN). Residues Cys211, His236, and Glu240 each coordinate Zn(2+). A 'KMSKS' region motif is present at residues 268 to 272 (KMSKS). Lys271 lines the ATP pocket.

The protein belongs to the class-I aminoacyl-tRNA synthetase family. In terms of assembly, monomer. Zn(2+) is required as a cofactor.

It is found in the cytoplasm. It carries out the reaction tRNA(Cys) + L-cysteine + ATP = L-cysteinyl-tRNA(Cys) + AMP + diphosphate. The protein is Cysteine--tRNA ligase of Fervidobacterium nodosum (strain ATCC 35602 / DSM 5306 / Rt17-B1).